A 120-amino-acid polypeptide reads, in one-letter code: uncharacterized protein (120 aa).

The N-acetyltransferase domain occupies 3–120; that stretch reads IRYKKAFEKI…EKCEICHGSE (118 aa).

This is an uncharacterized protein from Bacillus methanolicus.